A 92-amino-acid polypeptide reads, in one-letter code: Small ribosomal subunit protein uS19 (92 aa).

It belongs to the universal ribosomal protein uS19 family.

Its function is as follows. Protein S19 forms a complex with S13 that binds strongly to the 16S ribosomal RNA. The chain is Small ribosomal subunit protein uS19 from Pelobacter propionicus (strain DSM 2379 / NBRC 103807 / OttBd1).